The chain runs to 292 residues: uncharacterized protein (292 aa).

A Glycyl lysine isopeptide (Lys-Gly) (interchain with G-Cter in SUMO2) cross-link involves residue lysine 8. The tract at residues 47–67 (TKRKMLPSSSSRMRSDGFDEE) is disordered. Residue lysine 76 forms a Glycyl lysine isopeptide (Lys-Gly) (interchain with G-Cter in SUMO2) linkage. Asparagine 94 is modified (phosphothreonine). A phosphoserine mark is found at lysine 96 and phenylalanine 97. The segment at 122-292 (ETDSDQQDIT…ERSAESSEDD (171 aa)) is disordered. The residue at position 123 (threonine 123) is a Phosphothreonine. 2 positions are modified to phosphoserine: serine 125 and aspartate 126. Over residues 128–140 (QDITNGKKTSPQV) the composition is skewed to polar residues. The span at 147 to 173 (SRKHKKSKKSHKKKQKKRSHKKQKKSK) shows a compositional bias: basic residues. Polar residues predominate over residues 180 to 194 (TADSSSEFSEETGAS). Composition is skewed to basic residues over residues 197-215 (RKGKQPHKRKKKSRKKSLK) and 247-259 (KKTKRKKREKKAH). A compositionally biased stretch (basic and acidic residues) spans 280 to 292 (ATDERSAESSEDD).

This is an uncharacterized protein from Homo sapiens (Human).